The primary structure comprises 1162 residues: Lysine-specific demethylase 2A (1162 aa).

S28 bears the Phosphoserine mark. The region spanning 148 to 316 (FSHTRLENMV…MQLKIYNIED (169 aa)) is the JmjC domain. A substrate-binding site is contributed by T209. Positions 212 and 214 each coordinate Fe cation. K229 provides a ligand contact to substrate. H284 is a Fe cation binding site. The tract at residues 367–389 (GLESGNGDEEAVDREPRRLSSRR) is disordered. Phosphoserine occurs at positions 390 and 394. Residue K505 forms a Glycyl lysine isopeptide (Lys-Gly) (interchain with G-Cter in SUMO2) linkage. The tract at residues 532–557 (VPTIPITKPHTMKPAPRLTPVRPAAA) is disordered. T550 is subject to Phosphothreonine. A Phosphoserine modification is found at S558. The CXXC-type zinc finger occupies 564–610 (ARRRRVRCRKCKACVQGECGVCHYCRDMKKFGGPGRMKQSCVLRQCL). 10 residues coordinate Zn(2+): C571, C574, C577, C582, C585, C588, C604, C609, C620, and C623. The segment at 617-678 (SVTCSLCGEV…CWECPKCYQE (62 aa)) adopts a PHD-type zinc-finger fold. Phosphothreonine is present on T632. Residues C642, C645, H650, C653, C672, and C675 each contribute to the Zn(2+) site. Residue S692 is modified to Phosphoserine. Residues 704 to 789 (PLRSCDEPLT…PSGKKELSEV (86 aa)) are disordered. T713 is modified (phosphothreonine). A phosphoserine mark is found at S718 and S731. Composition is skewed to basic and acidic residues over residues 746 to 757 (SDHHSASRDERF) and 771 to 789 (TMVREKENNPSGKKELSEV). 4 positions are modified to phosphoserine: S825, S832, S869, and S883. Residues 839-887 (HCPARTPQRGDEEGLGGEEEEEEEEEEEDDSAEEGGAARLNGRGSWAQD) form a disordered region. The segment covering 851-871 (EGLGGEEEEEEEEEEEDDSAE) has biased composition (acidic residues). An F-box domain is found at 889 to 936 (DESWMQREVWMSVFRYLSRRELCECMRVCKTWYKWCCDKRLWTKIDLS). 2 LRR repeats span residues 961-982 (WTNISKKQLTWLVNRLPGLKDL) and 984-1010 (LAGCSWSAVSALSTSSCPLLRTLDLRW). R1020 is subject to ADP-ribosylarginine. 4 LRR repeats span residues 1048–1073 (GLDITDATLRLIIRHMPLLSRLDLSH), 1074–1103 (CSHLTDQSSNLLTAVGSSTRYSLTELNMAG), 1104–1128 (CNKLTDQTLIYLRRIANVTLIDLRG), and 1129–1156 (CKQITRKACEHFISDLSINSLYCLSDEK).

This sequence belongs to the JHDM1 histone demethylase family. As to quaternary structure, interacts with CBX5/HP1A; the interaction promotes CBX5 localization to chromatin. The SKP1-KDM2A complex interacts with UBB. Part of a SCF (SKP1-cullin-F-box) protein ligase complex. Fe(2+) is required as a cofactor. In terms of processing, mono-ADP-ribosylated at Arg-1020 in response to DNA damage, leading to displacement from chromatin, resulting in increased dimethylation of histone H3 at 'Lys-36'. As to expression, widely expressed, with highest levels in brain, testis and ovary, followed by lung.

Its subcellular location is the nucleus. It is found in the nucleoplasm. The protein resides in the chromosome. The enzyme catalyses N(6),N(6)-dimethyl-L-lysyl(36)-[histone H3] + 2 2-oxoglutarate + 2 O2 = L-lysyl(36)-[histone H3] + 2 formaldehyde + 2 succinate + 2 CO2. Histone demethylase that specifically demethylates 'Lys-36' of histone H3, thereby playing a central role in histone code. Preferentially demethylates dimethylated H3 'Lys-36' residue while it has weak or no activity for mono- and tri-methylated H3 'Lys-36'. May also recognize and bind to some phosphorylated proteins and promote their ubiquitination and degradation. Required to maintain the heterochromatic state. Associates with centromeres and represses transcription of small non-coding RNAs that are encoded by the clusters of satellite repeats at the centromere. Required to sustain centromeric integrity and genomic stability, particularly during mitosis. Regulates circadian gene expression by repressing the transcriptional activator activity of CLOCK-BMAL1 heterodimer and RORA in a catalytically-independent manner. This chain is Lysine-specific demethylase 2A (KDM2A), found in Homo sapiens (Human).